A 110-amino-acid chain; its full sequence is Flowering-promoting factor 1 (110 aa).

Belongs to the FPF1 family.

Its function is as follows. Modulates the competence to flowering of apical meristems. Involved in a GA-dependent response in apical meristems during the transition to flowering. The protein is Flowering-promoting factor 1 (FPF1) of Arabidopsis thaliana (Mouse-ear cress).